A 461-amino-acid chain; its full sequence is Tubulin gamma-2 chain (461 aa).

A GTP-binding site is contributed by 142 to 148 (AGGTGSG).

It belongs to the tubulin family.

The protein localises to the cytoplasm. Its subcellular location is the cytoskeleton. The protein resides in the microtubule organizing center. It is found in the centrosome. Tubulin is the major constituent of microtubules. The gamma chain is found at microtubule organizing centers (MTOC) such as the spindle poles or the centrosome, suggesting that it is involved in the minus-end nucleation of microtubule assembly. The protein is Tubulin gamma-2 chain of Euplotoides octocarinatus (Freshwater ciliate).